We begin with the raw amino-acid sequence, 294 residues long: Cytidine deaminase (294 aa).

CMP/dCMP-type deaminase domains follow at residues 49-169 (TPQQ…FGPA) and 188-294 (ETQD…YIAL). A substrate-binding site is contributed by 90–92 (NLE). His-103 provides a ligand contact to Zn(2+). The active-site Proton donor is Glu-105. Residues Cys-130 and Cys-133 each contribute to the Zn(2+) site.

The protein belongs to the cytidine and deoxycytidylate deaminase family. In terms of assembly, homodimer. Requires Zn(2+) as cofactor.

The catalysed reaction is cytidine + H2O + H(+) = uridine + NH4(+). It catalyses the reaction 2'-deoxycytidine + H2O + H(+) = 2'-deoxyuridine + NH4(+). This enzyme scavenges exogenous and endogenous cytidine and 2'-deoxycytidine for UMP synthesis. The polypeptide is Cytidine deaminase (Pasteurella multocida (strain Pm70)).